Reading from the N-terminus, the 478-residue chain is Hepatitis A virus cellular receptor 1 (478 aa).

The first 24 residues, 1–24 (MADPIMHLQVVILSLILHLADSVA), serve as a signal peptide directing secretion. The region spanning 25–126 (DSVNVDGVAG…WFNDMKITIS (102 aa)) is the Ig-like V-type domain. The Extracellular segment spans residues 25–397 (DSVNVDGVAG…SPQMVNTTEG (373 aa)). Disulfide bonds link C41–C110, C51–C62, and C57–C109. Residues N70 and N87 are each glycosylated (N-linked (GlcNAc...) asparagine). Repeat copies occupy residues 148 to 155 (VPTTTTTT), 156 to 161 (LPTTTT), 162 to 167 (LPTTTT), 168 to 173 (LPTTMT), 174 to 179 (LPTTTT), 180 to 185 (LPMTTT), 186 to 191 (LPTTTT), 192 to 197 (VPMTTT), 198 to 201 (LPTT), 202 to 207 (LPTTTT), 208 to 211 (LPTT), 212 to 217 (LPTTTT), 218 to 221 (LPTT), 222 to 227 (LPTTTT), 228 to 233 (LPTTMT), 234 to 239 (LPMTTT), 240 to 245 (LPTTTT), 246 to 251 (LPTTTT), 252 to 257 (LPTTTT), 258 to 263 (LPTTTT), 264 to 268 (LPTTT), 269 to 273 (LPTMT), 274 to 279 (LPTTTT), 280 to 285 (LPTTMT), 286 to 291 (LPMTTT), 292 to 297 (LPTTTT), 298 to 303 (LPTTTT), and 304 to 309 (LPTTTM). A 28 X 6 AA approximate tandem repeats of L-P-[MT]-T-[MT]-T region spans residues 148-309 (VPTTTTTTLP…TTTTLPTTTM (162 aa)). The segment at 187 to 303 (PTTTTVPMTT…TTTTLPTTTT (117 aa)) is disordered. Disordered stretches follow at residues 320 to 339 (PMQD…PAET) and 344 to 370 (LLGA…TVTE). Residues 348-370 (TRTQPTSSPLYSYTTDGSDTVTE) are compositionally biased toward polar residues. 2 N-linked (GlcNAc...) asparagine glycosylation sites follow: N379 and N393. The helical transmembrane segment at 398 to 418 (IYAGVCISVLVLLAVLGVVIA) threads the bilayer. Residues 419–478 (KKYFFKKEIQQLSVSFSNHQFKTLQNAVKKEVHAEDNIYIENNLYAMNQDPVVLFESLRP) lie on the Cytoplasmic side of the membrane.

This sequence belongs to the immunoglobulin superfamily. TIM family. In terms of assembly, interacts with STAM. Interacts with SELPLG.

Its subcellular location is the cell membrane. Phosphatidylserine receptor that plays an important functional role in regulatory B-cells homeostasis including generation, expansion and suppressor functions. As P-selectin/SELPLG ligand, plays a specialized role in activated but not naive T-cell trafficking during inflammatory responses. Controls thereby T-cell accumulation in the inflamed central nervous system (CNS) and the induction of autoimmune disease. Also regulates expression of various anti-inflammatory cytokines and co-inhibitory ligands including IL10. Acts as a regulator of T-cell proliferation. May play a role in kidney injury and repair. The sequence is that of Hepatitis A virus cellular receptor 1 (HAVCR1) from Chlorocebus aethiops (Green monkey).